An 82-amino-acid chain; its full sequence is DNA-directed RNA polymerase subunit Rpo5 (82 aa).

Belongs to the archaeal Rpo5/eukaryotic RPB5 RNA polymerase subunit family. Part of the RNA polymerase complex.

The protein localises to the cytoplasm. It catalyses the reaction RNA(n) + a ribonucleoside 5'-triphosphate = RNA(n+1) + diphosphate. DNA-dependent RNA polymerase (RNAP) catalyzes the transcription of DNA into RNA using the four ribonucleoside triphosphates as substrates. The chain is DNA-directed RNA polymerase subunit Rpo5 from Thermococcus onnurineus (strain NA1).